A 462-amino-acid polypeptide reads, in one-letter code: Cysteine--tRNA ligase (462 aa).

Cys28 contacts Zn(2+). A 'HIGH' region motif is present at residues 30–40 (VTIYDLCHIGH). Cys211, His236, and Glu240 together coordinate Zn(2+). The 'KMSKS' region motif lies at 268–272 (KMSKS). An ATP-binding site is contributed by Lys271.

The protein belongs to the class-I aminoacyl-tRNA synthetase family. As to quaternary structure, monomer. Requires Zn(2+) as cofactor.

The protein localises to the cytoplasm. The catalysed reaction is tRNA(Cys) + L-cysteine + ATP = L-cysteinyl-tRNA(Cys) + AMP + diphosphate. This Aliivibrio salmonicida (strain LFI1238) (Vibrio salmonicida (strain LFI1238)) protein is Cysteine--tRNA ligase.